We begin with the raw amino-acid sequence, 622 residues long: MPPTQAESVIKNIIREIGQECAAHGEITSETVVAFMVKAVVLDPSNGFNMDRTLVKTDVQKLVKLCVARLLDNKNPSLDTIKMQVYFDMNYTSREDFLEEHHRVLESRLGIVSREITDTRACAKEELENLYRKIVSYVLLRSGLGSPTDIKIVREATAALQSVFPQAELCTFLTLSKKDKERQLKELTMIVTGIRLFNRDCGKGGEGIDDLPAILLEAIPATTHHIDSQLQIAQEQAFRYTAIIEKVTNNPLMAKELQPYMLKEALYNVRQYEIFLQTVLSDIITCAEEVELMTKQLAAQLEQLKMTVKSKTAVPTSQVFPIFIALASLWTSFQDETVLISVLSNLTTNLELFLGTHDLLFPEKVMQGLLDGVIVKTDMTRIEEHLEEKVQLADFRVLEWLFPETTANFNKLLIQYRGFCGYTFAVTDGLLLPGNPTIGILKYKEKYYTFNSRDAAYSFAENPDHYINLIKEKAKKNAELIQLLELHQQFETLIPYSQMKDVDKHFIKPITKCENGTQTDTHILPPTIVRSYEWNEWELRRKAIQLANLRQKMTHSVQTDLSHMRRDNASQVYPLKEVGTQSKREGSTRVPRPQIFIAGLRGGQSKTTHGVKINLTRAVDET.

The protein belongs to the CFAP206 family.

The protein resides in the cytoplasm. Its subcellular location is the cytoskeleton. The protein localises to the cilium axoneme. It is found in the cilium basal body. In terms of biological role, essential for sperm motility and is involved in the regulation of the beating frequency of motile cilia on the epithelial cells of the respiratory tract. Required for the establishment of radial spokes in sperm flagella. This chain is Cilia- and flagella-associated protein 206, found in Rattus norvegicus (Rat).